Reading from the N-terminus, the 132-residue chain is DNA-directed RNA polymerase subunit omega (132 aa).

It belongs to the RNA polymerase subunit omega family. The RNAP catalytic core consists of 2 alpha, 1 beta, 1 beta' and 1 omega subunit. When a sigma factor is associated with the core the holoenzyme is formed, which can initiate transcription.

The catalysed reaction is RNA(n) + a ribonucleoside 5'-triphosphate = RNA(n+1) + diphosphate. Its function is as follows. Promotes RNA polymerase assembly. Latches the N- and C-terminal regions of the beta' subunit thereby facilitating its interaction with the beta and alpha subunits. In Bartonella quintana (strain Toulouse) (Rochalimaea quintana), this protein is DNA-directed RNA polymerase subunit omega.